Here is a 579-residue protein sequence, read N- to C-terminus: Glutamine--tRNA ligase (579 aa).

The 'HIGH' region motif lies at P41 to H51. ATP-binding positions include E42–N44 and H48–A54. Residues D74 and Y218 each coordinate L-glutamine. ATP is bound by residues T237, R285 to L286, and M293 to K295. Residues V292–R296 carry the 'KMSKS' region motif.

The protein belongs to the class-I aminoacyl-tRNA synthetase family. In terms of assembly, monomer.

The protein localises to the cytoplasm. The enzyme catalyses tRNA(Gln) + L-glutamine + ATP = L-glutaminyl-tRNA(Gln) + AMP + diphosphate. The protein is Glutamine--tRNA ligase of Xanthomonas euvesicatoria pv. vesicatoria (strain 85-10) (Xanthomonas campestris pv. vesicatoria).